The sequence spans 180 residues: Prothoracicotropic hormone (180 aa).

The first 15 residues, 1–15 (MKLLILCVMVHGLLA), serve as a signal peptide directing secretion. Residues 16 to 64 (EGPGQVLWKEQVVAPEFLLDDREDIASNRNAFFYEDKRSFRPEGLGEQV) constitute a propeptide that is removed on maturation. Cystine bridges form between Cys88–Cys123 and Cys111–Cys175.

Homodimer; disulfide-linked.

It localises to the secreted. Its function is as follows. PTTH is a brain secretory polypeptide of insects which stimulates the prothoracic glands to produce and release ecdysone, the steroid essential to insect development. In Camponotus floridanus (Florida carpenter ant), this protein is Prothoracicotropic hormone.